The sequence spans 425 residues: Serine hydroxymethyltransferase (425 aa).

Residues L128 and 132 to 134 contribute to the (6S)-5,6,7,8-tetrahydrofolate site; that span reads GHL. K237 carries the N6-(pyridoxal phosphate)lysine modification.

The protein belongs to the SHMT family. As to quaternary structure, homodimer. Pyridoxal 5'-phosphate is required as a cofactor.

It localises to the cytoplasm. The enzyme catalyses (6R)-5,10-methylene-5,6,7,8-tetrahydrofolate + glycine + H2O = (6S)-5,6,7,8-tetrahydrofolate + L-serine. It functions in the pathway one-carbon metabolism; tetrahydrofolate interconversion. It participates in amino-acid biosynthesis; glycine biosynthesis; glycine from L-serine: step 1/1. Functionally, catalyzes the reversible interconversion of serine and glycine with tetrahydrofolate (THF) serving as the one-carbon carrier. This reaction serves as the major source of one-carbon groups required for the biosynthesis of purines, thymidylate, methionine, and other important biomolecules. Also exhibits THF-independent aldolase activity toward beta-hydroxyamino acids, producing glycine and aldehydes, via a retro-aldol mechanism. The chain is Serine hydroxymethyltransferase from Wolbachia sp. subsp. Drosophila simulans (strain wRi).